A 183-amino-acid chain; its full sequence is Probable calcium-binding protein CML47 (183 aa).

EF-hand domains are found at residues 112–147 (MGKE…LGYD) and 149–183 (CTKM…KSFS). 9 residues coordinate Ca(2+): Asp-125, Asn-127, Asp-129, Glu-136, Asp-162, Asn-164, Asp-166, Lys-168, and Glu-173.

Its function is as follows. Potential calcium sensor. The protein is Probable calcium-binding protein CML47 (CML47) of Arabidopsis thaliana (Mouse-ear cress).